The primary structure comprises 311 residues: 2-phospho-L-lactate transferase (311 aa).

The 7,8-didemethyl-8-hydroxy-5-deazariboflavin site is built by aspartate 52 and arginine 91.

It belongs to the CofD family. Homodimer. Mg(2+) is required as a cofactor.

It catalyses the reaction (2S)-lactyl-2-diphospho-5'-guanosine + 7,8-didemethyl-8-hydroxy-5-deazariboflavin = oxidized coenzyme F420-0 + GMP + H(+). The protein operates within cofactor biosynthesis; coenzyme F420 biosynthesis. Inhibited by EDTA in vitro. Catalyzes the transfer of the 2-phospholactate moiety from (2S)-lactyl-2-diphospho-5'-guanosine to 7,8-didemethyl-8-hydroxy-5-deazariboflavin (FO) with the formation of oxidized coenzyme F420-0 and GMP. The chain is 2-phospho-L-lactate transferase from Methanocaldococcus jannaschii (strain ATCC 43067 / DSM 2661 / JAL-1 / JCM 10045 / NBRC 100440) (Methanococcus jannaschii).